The primary structure comprises 277 residues: Release factor glutamine methyltransferase (277 aa).

Residues 117–121 (GTGTG), aspartate 140, tryptophan 168, and asparagine 183 each bind S-adenosyl-L-methionine. Substrate is bound at residue 183–186 (NPPY).

It belongs to the protein N5-glutamine methyltransferase family. PrmC subfamily.

It catalyses the reaction L-glutaminyl-[peptide chain release factor] + S-adenosyl-L-methionine = N(5)-methyl-L-glutaminyl-[peptide chain release factor] + S-adenosyl-L-homocysteine + H(+). Functionally, methylates the class 1 translation termination release factors RF1/PrfA and RF2/PrfB on the glutamine residue of the universally conserved GGQ motif. In Shigella dysenteriae serotype 1 (strain Sd197), this protein is Release factor glutamine methyltransferase.